The following is a 204-amino-acid chain: Probable chorismate pyruvate-lyase (204 aa).

Substrate contacts are provided by arginine 75, leucine 113, and glutamate 160.

This sequence belongs to the UbiC family.

The protein resides in the cytoplasm. It carries out the reaction chorismate = 4-hydroxybenzoate + pyruvate. Its pathway is cofactor biosynthesis; ubiquinone biosynthesis. Functionally, removes the pyruvyl group from chorismate, with concomitant aromatization of the ring, to provide 4-hydroxybenzoate (4HB) for the ubiquinone pathway. In Alcanivorax borkumensis (strain ATCC 700651 / DSM 11573 / NCIMB 13689 / SK2), this protein is Probable chorismate pyruvate-lyase.